A 208-amino-acid polypeptide reads, in one-letter code: Probable GTP-binding protein EngB (208 aa).

The 175-residue stretch at 25–199 folds into the EngB-type G domain; sequence TGIEVAFAGR…RQKLDSWYNG (175 aa). GTP-binding positions include 33-40, 60-64, 78-81, 145-148, and 178-180; these read GRSNAGKS, GRTQL, DLPG, TKSD, and FSS. Mg(2+) is bound by residues Ser-40 and Thr-62.

It belongs to the TRAFAC class TrmE-Era-EngA-EngB-Septin-like GTPase superfamily. EngB GTPase family. The cofactor is Mg(2+).

Functionally, necessary for normal cell division and for the maintenance of normal septation. The sequence is that of Probable GTP-binding protein EngB from Enterobacter sp. (strain 638).